A 310-amino-acid chain; its full sequence is Acetylglutamate kinase (310 aa).

Substrate-binding positions include 83–84 (GG), arginine 105, and asparagine 207.

This sequence belongs to the acetylglutamate kinase family. ArgB subfamily.

The protein resides in the cytoplasm. The catalysed reaction is N-acetyl-L-glutamate + ATP = N-acetyl-L-glutamyl 5-phosphate + ADP. The protein operates within amino-acid biosynthesis; L-arginine biosynthesis; N(2)-acetyl-L-ornithine from L-glutamate: step 2/4. In terms of biological role, catalyzes the ATP-dependent phosphorylation of N-acetyl-L-glutamate. The polypeptide is Acetylglutamate kinase (Ralstonia nicotianae (strain ATCC BAA-1114 / GMI1000) (Ralstonia solanacearum)).